The following is a 599-amino-acid chain: MAEAGDENLYAAARDIARALGKDPSAAGDILQILSGYGASGNRGGDPRPTPSRGGSNVNFDRALTSLERQISSYIVEDRPIWSDPVDSRTFLDSVDELLAIAGDLRSMAGDKSVAVCQSRADELIQQVMFRLQEEFGFVMDRAPDSFDSDDEFPGEEDNDTSDGVIVARPITDYKIVIEALQSSVIGDLNAIAVRMVAGGFAKECSRVYSSRRREFLEESLSRLHLRGLSMEEVQESPWQDLEDEIDRWIKAVTLIFHVFFPSERLLCDRVFSDLPVSSVTDLSFMEVCRGTTTQLLNFADAIALGSRLPERLFKVVDLYEAMQDLIPKMETLFSDRYCSPLRHEALAIHKRLGEAIRGIFMELENLIRRDPPKTAFPGGGIHPITRYVMNYLRAACKSRQSLEQILDQTGNETGSDTRPLSVQIIWVLELLESNLEGKKRTYRDPSLCFLFMMNNDKYILDKAKDNELGLVLGEDWIVKHAAKLRQYHSNYRRSSWNQVVGLLRTDGPYPKLVENLRLFKSQFDEVCKVQSQWVVSDGQLREELRSSVAGIVSPAYSNFIRRLKESPEINGRRGEPFIPYTVEDVEFIIKRLFKESSS.

The segment at Gly38–Val58 is disordered.

It belongs to the EXO70 family. In terms of assembly, self interacts. Interacts with EXO70B1. Interacts with the exocyst subunits EXO70H1, SEC5A and SEC15B. Binds to SNAP33. Subunit of the exocyst complex that mediates vesicle tethering during exocytosis. Binds to PUB22. Target of the E3 ubiquitin-protein ligase PUB22 that mediates its ubiquitination and degradation via the 26S proteasome to attenuate pathogen-associated molecular patterns (PAMP)-induced signaling, especially is response to the bacterial elicitor flg22. Mostly expressed in leaves and, to a lower extent, in roots, cotyledons, internodes, flower buds, siliques and anthers.

It localises to the cytoplasmic vesicle. It is found in the phagosome. The protein localises to the cytoplasm. Its subcellular location is the nucleus. In terms of biological role, component of an exocyst subcomplex specifically involved in autophagy-related, Golgi-independent membrane traffic to the vacuole. Regulates autophagosome formation and autophagy-related Golgi-independent import into the vacuole. Positive regulator of defense responses to pathogenic bacteria (e.g. P.syringae pv. maculicola), to the biotrophic oomycete H.arabidopsidis and to fungi (e.g. B.graminis hordei), especially in cell wall apposition formation related to plant defense. Required for both immediate and later responses triggered by pathogen-associated molecular patterns (PAMPs). Positive regulator of abscisic acid (ABA)-independent mannitol (drought)-promoted stomatal closure. This chain is Exocyst complex component EXO70B2, found in Arabidopsis thaliana (Mouse-ear cress).